We begin with the raw amino-acid sequence, 314 residues long: MTDATVPTFDLAELREGLHQEEFRHCLREKGVFYLKGTGLPAEADHASGREIAVDFFDHGTEAEKKAVMTPIPTIRRGYAGLESESTAQITNTGKYTDYSMSYSMGTADNLFPSAEFEKAWEDYFARMYRASQDVARQVLTSVGAEPEVGMDAFLDCEPLLRLRYFPEVPEDRVAEEQPLRMAPHYDLSIVTLIHQTPCANGFVSLQVEVDGSYVDIPAQPGAVLVFCGAVATLVADGAIKAPKHHVAAPGADKRVGSSRTSSVFFLRPNGDFRFSVPRARECGFDVSIPAETATFDDWIGGNYINIRKTAAAR.

One can recognise a Fe2OG dioxygenase domain in the interval 156 to 269; sequence DCEPLLRLRY…RTSSVFFLRP (114 aa).

The protein belongs to the iron/ascorbate-dependent oxidoreductase family. It depends on Fe cation as a cofactor. L-ascorbate serves as cofactor.

The enzyme catalyses penicillin N + 2-oxoglutarate + O2 = deacetoxycephalosporin C + succinate + CO2 + H2O. It functions in the pathway antibiotic biosynthesis; cephalosporin C biosynthesis. Its function is as follows. Catalyzes the step from penicillin N to deacetoxy-cephalosporin C. In Amycolatopsis lactamdurans (Nocardia lactamdurans), this protein is Deacetoxycephalosporin C synthase (cefE).